Here is a 66-residue protein sequence, read N- to C-terminus: Large ribosomal subunit protein bL35 (66 aa).

The protein belongs to the bacterial ribosomal protein bL35 family.

The polypeptide is Large ribosomal subunit protein bL35 (Ruegeria sp. (strain TM1040) (Silicibacter sp.)).